The following is a 413-amino-acid chain: Calsequestrin-2 (413 aa).

An N-terminal signal peptide occupies residues 1–19 (MKRIYLLVVGLYLLSFSRA). Phosphotyrosine is present on Tyr282. N-linked (GlcNAc...) asparagine glycosylation occurs at Asn335. The interval 365–413 (VLSGKINTEDDDNEDEDDDGDNDNDDDDDDDDNSDEDNDDSDDDDDDDE) is disordered. Residues 373-413 (EDDDNEDEDDDGDNDNDDDDDDDDNSDEDNDDSDDDDDDDE) are compositionally biased toward acidic residues. Phosphoserine is present on residues Ser398 and Ser405.

This sequence belongs to the calsequestrin family. As to quaternary structure, monomer, homodimer and homooligomer. Mostly monomeric in the absence of calcium. Forms higher oligomers in a calcium-dependent manner. Dimers associate to form tetramers, that then form linear homomer chains. Interacts with ASPH and TRDN. Post-translationally, phosphorylation in the C-terminus, probably by CK2, moderately increases calcium buffering capacity. N-glycosylated. In terms of tissue distribution, detected in stomach and vas deferens (at protein level).

Its subcellular location is the sarcoplasmic reticulum lumen. Functionally, calsequestrin is a high-capacity, moderate affinity, calcium-binding protein and thus acts as an internal calcium store in muscle. Calcium ions are bound by clusters of acidic residues at the protein surface, especially at the interface between subunits. Can bind around 60 Ca(2+) ions. Regulates the release of lumenal Ca(2+) via the calcium release channel RYR2; this plays an important role in triggering muscle contraction. Plays a role in excitation-contraction coupling in the heart and in regulating the rate of heart beats. In Rattus norvegicus (Rat), this protein is Calsequestrin-2 (Casq2).